The sequence spans 462 residues: MYKILSSFVAGVAIGSGLVITYVLYNVPEPPELDLQRWWGIGTRPTEEDKSIRPFSIDFNDTVILDLKERLKNRRPFTKPLEGINSEYGMNTEYLETVLEYWLNEYNFKKRAELLNKFPHYKTRIQGLDLHFIRVKPEIKEGVQVLPLLMMHGWPSSSKEFDKVIPILTTPKHEYNIVFEVVAVDLPGYGFSEGTNKPGLNPVQIGVMMRNLMLRLGFEKFYIQAGDWGSQCATHMATLFPDQVLGLHTNMPLSSRPLSTVKLFIGALFPSLIVDAKYMDRIYPLKNLFSYILRETGYFHIQATKPDTIGVALTDSPAGLAGYLIEKMAICSNRDQLDTPHGGLENLNLDDVLDTVTINWINNCIVTSTRLYAEGFSWPEVLIVHRIPSMVPTAGINFKYEVLYQPDWILRDKFPNLVRSTVLDFGGHFAALHTPQALADDIFASAVQFLKFHDRKRNQKSS.

Residues 4–24 (ILSSFVAGVAIGSGLVITYVL) traverse the membrane as a helical segment. Asp-227 (nucleophile) is an active-site residue. Tyr-372 (proton donor) is an active-site residue. His-428 functions as the Proton acceptor in the catalytic mechanism.

This sequence belongs to the peptidase S33 family.

The protein resides in the microsome membrane. Its subcellular location is the endoplasmic reticulum membrane. The catalysed reaction is cis-stilbene oxide + H2O = (1R,2R)-hydrobenzoin. It carries out the reaction 1-(4-methoxyphenyl)-N-methyl-N-[(3-methyloxetan-3-yl)methyl]methanamine + H2O = 2-{[(4-methoxybenzyl)(methyl)amino]methyl}-2-methylpropane-1,3-diol. Functionally, catalyzes juvenile hormone hydrolysis. In Manduca sexta (Tobacco hawkmoth), this protein is Juvenile hormone epoxide hydrolase.